The following is a 153-amino-acid chain: Large ribosomal subunit protein uL15 (153 aa).

Residues 1–40 show a composition bias toward basic residues; the sequence is MTDKKRRQRGSRTHGGGTHKNRRGAGNRGGRGRAGRKKHE. Positions 1 to 60 are disordered; it reads MTDKKRRQRGSRTHGGGTHKNRRGAGNRGGRGRAGRKKHEQHNYEDVGKSGFKRPEKTDR. The span at 41 to 60 shows a compositional bias: basic and acidic residues; sequence QHNYEDVGKSGFKRPEKTDR.

The protein belongs to the universal ribosomal protein uL15 family. In terms of assembly, part of the 50S ribosomal subunit.

Binds to the 23S rRNA. In Halobacterium salinarum (strain ATCC 29341 / DSM 671 / R1), this protein is Large ribosomal subunit protein uL15.